A 122-amino-acid polypeptide reads, in one-letter code: Large ribosomal subunit protein uL14 (122 aa).

Belongs to the universal ribosomal protein uL14 family. In terms of assembly, part of the 50S ribosomal subunit. Forms a cluster with proteins L3 and L19. In the 70S ribosome, L14 and L19 interact and together make contacts with the 16S rRNA in bridges B5 and B8.

Binds to 23S rRNA. Forms part of two intersubunit bridges in the 70S ribosome. The protein is Large ribosomal subunit protein uL14 of Trichormus variabilis (strain ATCC 29413 / PCC 7937) (Anabaena variabilis).